The sequence spans 144 residues: 3-dehydroquinate dehydratase (144 aa).

Tyr24 functions as the Proton acceptor in the catalytic mechanism. Substrate is bound by residues Asn73, His79, and Asp86. His99 functions as the Proton donor in the catalytic mechanism. Residues 100–101 (LS) and Arg110 each bind substrate.

Belongs to the type-II 3-dehydroquinase family. In terms of assembly, homododecamer.

The enzyme catalyses 3-dehydroquinate = 3-dehydroshikimate + H2O. Its pathway is metabolic intermediate biosynthesis; chorismate biosynthesis; chorismate from D-erythrose 4-phosphate and phosphoenolpyruvate: step 3/7. Its function is as follows. Catalyzes a trans-dehydration via an enolate intermediate. The chain is 3-dehydroquinate dehydratase from Shewanella sp. (strain ANA-3).